Reading from the N-terminus, the 256-residue chain is Small ribosomal subunit protein uS2 (256 aa).

This sequence belongs to the universal ribosomal protein uS2 family.

The protein is Small ribosomal subunit protein uS2 of Streptococcus equi subsp. equi (strain 4047).